We begin with the raw amino-acid sequence, 207 residues long: Superoxide dismutase [Mn] (207 aa).

4 residues coordinate Mn(2+): His-28, His-76, Asp-160, and His-164.

Belongs to the iron/manganese superoxide dismutase family. Mn(2+) serves as cofactor.

It carries out the reaction 2 superoxide + 2 H(+) = H2O2 + O2. Functionally, destroys superoxide anion radicals which are normally produced within the cells and which are toxic to biological systems. The chain is Superoxide dismutase [Mn] (sodA) from Mycobacterium avium.